Consider the following 994-residue polypeptide: E3 ubiquitin-protein ligase Arkadia (994 aa).

Glycyl lysine isopeptide (Lys-Gly) (interchain with G-Cter in SUMO2) cross-links involve residues Lys-19, Lys-28, Lys-34, Lys-47, Lys-59, Lys-73, Lys-87, Lys-96, and Lys-110. The segment covering 66–89 (HLCDDSQKQEKEMNGNQQEQEKSL) has biased composition (basic and acidic residues). The interval 66-106 (HLCDDSQKQEKEMNGNQQEQEKSLVVRKKRKSQQAGPSYVQ) is disordered. Residues 120–191 (QHLGTPSDED…HKWPRTETES (72 aa)) form a disordered region. Low complexity predominate over residues 132–151 (SSFSDCLSSPSSSLHFGDSD). The span at 164 to 173 (RHSQTILNAK) shows a compositional bias: polar residues. Lys-173 is covalently cross-linked (Glycyl lysine isopeptide (Lys-Gly) (interchain with G-Cter in SUMO2)). The span at 174–184 (SRSHSARSHKW) shows a compositional bias: basic residues. Residues Lys-198 and Lys-218 each participate in a glycyl lysine isopeptide (Lys-Gly) (interchain with G-Cter in SUMO2) cross-link. The interval 212-277 (CRKRFVKNNS…SSSTEGEEDL (66 aa)) is disordered. The segment covering 234-247 (MQRKKREVLARRKY) has biased composition (basic residues). Residues 241-404 (VLARRKYALL…VPTTSARMES (164 aa)) are interaction with AXIN1. Over residues 252–271 (SSSSSSENDLSSESSSSSST) the composition is skewed to low complexity. The SUMO interaction motif 1 (SIM) signature appears at 300-304 (VVVIE). The short motif at 325–331 (EVEIVTV) is the SUMO interaction motif 2 (SIM) element. A disordered region spans residues 337–371 (SRSTLGHSRSHWSQGSSSHASRPQEPRNRSRISTV). A compositionally biased stretch (low complexity) spans 347–357 (HWSQGSSSHAS). The short motif at 382 to 386 (VVDLT) is the SUMO interaction motif 3 (SIM) element. Disordered stretches follow at residues 388 to 476 (DEDE…AMPR), 508 to 537 (HGHH…DPAC), 610 to 684 (APSQ…VDYV), and 696 to 742 (ISSH…APPA). Residues 395–467 (VPTTSARMES…SRRTTSSAVT (73 aa)) show a composition bias toward polar residues. Positions 508 to 522 (HGHHFQHHHHHHHTP) are enriched in basic residues. Over residues 670 to 680 (NPPPQTQPPPQ) the composition is skewed to pro residues. Positions 907 to 909 (YPH) are ubiquitin binding. Residues Lys-923 and Lys-927 each participate in a glycyl lysine isopeptide (Lys-Gly) (interchain with G-Cter in SUMO2) cross-link. Positions 942 and 945 each coordinate Zn(2+). Residues 942–983 (CTICLSILEEGEDVRRLPCMHLFHQVCVDQWLITNKKCPICR) form an RING-type; atypical zinc finger. Residues 957–961 (RLPCM) are ubiquitin binding. Residues His-965 and Cys-968 each contribute to the Zn(2+) site.

This sequence belongs to the Arkadia family. As to quaternary structure, monomer. Interacts with SMAD6, SMAD7, AXIN1, AXIN2 and SKIL isoform SNON. Interacts with (phosphorylated) SMAD2 and SMAD3. Part of a complex containing RNF111, AXIN1 and SMAD7. Interacts (via SIM domains) with SUMO1 and SUMO2. Broadly expressed.

The protein resides in the nucleus. It is found in the cytoplasm. It localises to the PML body. The catalysed reaction is S-ubiquitinyl-[E2 ubiquitin-conjugating enzyme]-L-cysteine + [acceptor protein]-L-lysine = [E2 ubiquitin-conjugating enzyme]-L-cysteine + N(6)-ubiquitinyl-[acceptor protein]-L-lysine.. It functions in the pathway protein modification; protein ubiquitination. With respect to regulation, binds free ubiquitin non-covalently via its RING-type zinc finger. Ubiquitin-binding leads to enhance the E3 ubiquitin-protein ligase activity by stabilizing the ubiquitin-conjugating enzyme E2 (donor ubiquitin) in the 'closed' conformation and activating ubiquitin transfer. In terms of biological role, E3 ubiquitin-protein ligase. Required for mesoderm patterning during embryonic development. Acts as an enhancer of the transcriptional responses of the SMAD2/SMAD3 effectors, which are activated downstream of BMP. Acts by mediating ubiquitination and degradation of SMAD inhibitors such as SMAD7, inducing their proteasomal degradation and thereby enhancing the transcriptional activity of TGF-beta and BMP. In addition to enhance transcription of SMAD2/SMAD3 effectors, also regulates their turnover by mediating their ubiquitination and subsequent degradation, coupling their activation with degradation, thereby ensuring that only effectors 'in use' are degraded. Activates SMAD3/SMAD4-dependent transcription by triggering signal-induced degradation of SNON isoform of SKIL. Associates with UBE2D2 as an E2 enzyme. Specifically binds polysumoylated chains via SUMO interaction motifs (SIMs) and mediates ubiquitination of sumoylated substrates. Catalyzes 'Lys-63'-linked ubiquitination of sumoylated XPC in response to UV irradiation, promoting nucleotide excision repair. Mediates ubiquitination and degradation of sumoylated PML. The regulation of the BMP-SMAD signaling is however independent of sumoylation and is not dependent of SUMO interaction motifs (SIMs). The polypeptide is E3 ubiquitin-protein ligase Arkadia (Homo sapiens (Human)).